The following is a 276-amino-acid chain: Pantothenate synthetase (276 aa).

Residue 27-34 coordinates ATP; that stretch reads MGALHKGH. His-34 serves as the catalytic Proton donor. Gln-58 contacts (R)-pantoate. A beta-alanine-binding site is contributed by Gln-58. 147–150 serves as a coordination point for ATP; the sequence is GKKD. Gln-153 provides a ligand contact to (R)-pantoate. ATP is bound by residues Val-176 and 184 to 187; that span reads LSSR.

This sequence belongs to the pantothenate synthetase family. As to quaternary structure, homodimer.

The protein resides in the cytoplasm. The enzyme catalyses (R)-pantoate + beta-alanine + ATP = (R)-pantothenate + AMP + diphosphate + H(+). It functions in the pathway cofactor biosynthesis; (R)-pantothenate biosynthesis; (R)-pantothenate from (R)-pantoate and beta-alanine: step 1/1. In terms of biological role, catalyzes the condensation of pantoate with beta-alanine in an ATP-dependent reaction via a pantoyl-adenylate intermediate. This is Pantothenate synthetase from Helicobacter pylori (strain Shi470).